The chain runs to 183 residues: ATP-dependent protease subunit HslV (183 aa).

Residue threonine 2 is part of the active site. Residues alanine 157, cysteine 160, and threonine 163 each contribute to the Na(+) site.

Belongs to the peptidase T1B family. HslV subfamily. As to quaternary structure, a double ring-shaped homohexamer of HslV is capped on each side by a ring-shaped HslU homohexamer. The assembly of the HslU/HslV complex is dependent on binding of ATP.

It is found in the cytoplasm. The enzyme catalyses ATP-dependent cleavage of peptide bonds with broad specificity.. With respect to regulation, allosterically activated by HslU binding. Its function is as follows. Protease subunit of a proteasome-like degradation complex believed to be a general protein degrading machinery. The chain is ATP-dependent protease subunit HslV from Marinomonas sp. (strain MWYL1).